The following is a 358-amino-acid chain: Probable protein phosphatase 2C 34 (358 aa).

The PPM-type phosphatase domain maps to 62–349; sequence LASVFSRRGE…DDISAVCLFF (288 aa). Residues aspartate 98, glycine 99, aspartate 294, and aspartate 340 each coordinate Mn(2+).

It belongs to the PP2C family. Mg(2+) serves as cofactor. Mn(2+) is required as a cofactor.

It catalyses the reaction O-phospho-L-seryl-[protein] + H2O = L-seryl-[protein] + phosphate. The enzyme catalyses O-phospho-L-threonyl-[protein] + H2O = L-threonyl-[protein] + phosphate. The sequence is that of Probable protein phosphatase 2C 34 from Arabidopsis thaliana (Mouse-ear cress).